We begin with the raw amino-acid sequence, 466 residues long: cGMP-specific 3',5'-cGMP phosphodiesterase 3 (466 aa).

Positions 1-120 (MAPQQNIMKQ…NSNNNNSNNN (120 aa)) are enriched in low complexity. The disordered stretch occupies residues 1–150 (MAPQQNIMKQ…NNNKIRGYND (150 aa)). Over residues 123-134 (DDEEEEGDDEDN) the composition is skewed to acidic residues. Residues 135–150 (NNNNNSNNNKIRGYND) show a composition bias toward low complexity. Residues 137-458 (NNNSNNNKIR…EIWSNNGSSS (322 aa)) form the PDEase domain. The active-site Proton donor is the H213. A divalent metal cation-binding residues include H217, H253, D254, and D364.

Belongs to the cyclic nucleotide phosphodiesterase family. The cofactor is a divalent metal cation.

It is found in the cytoplasm. It localises to the cytosol. The enzyme catalyses 3',5'-cyclic GMP + H2O = GMP + H(+). Inhibited by 3-isobutyl-1-methylxanthine (IBMX). Functionally, phosphodiesterase specific for cGMP, which is not activated by cGMP. Involved in the degradation of intracellular cGMP. The chain is cGMP-specific 3',5'-cGMP phosphodiesterase 3 (pde3) from Dictyostelium discoideum (Social amoeba).